Consider the following 230-residue polypeptide: TPR repeat-containing protein BB_0298 (230 aa).

TPR repeat units lie at residues 69-102 and 183-216; these read ARFF…NPNN and FEFL…ASTE.

The polypeptide is TPR repeat-containing protein BB_0298 (Borreliella burgdorferi (strain ATCC 35210 / DSM 4680 / CIP 102532 / B31) (Borrelia burgdorferi)).